The primary structure comprises 202 residues: Small ribosomal subunit protein uS4c (202 aa).

One can recognise an S4 RNA-binding domain in the interval 90 to 152; the sequence is MRLDNLIFRL…AASKSLVNTY (63 aa).

This sequence belongs to the universal ribosomal protein uS4 family. Part of the 30S ribosomal subunit. Contacts protein S5. The interaction surface between S4 and S5 is involved in control of translational fidelity.

Its subcellular location is the plastid. It is found in the chloroplast. Functionally, one of the primary rRNA binding proteins, it binds directly to 16S rRNA where it nucleates assembly of the body of the 30S subunit. Its function is as follows. With S5 and S12 plays an important role in translational accuracy. The chain is Small ribosomal subunit protein uS4c (rps4) from Emiliania huxleyi (Coccolithophore).